A 130-amino-acid chain; its full sequence is Small ribosomal subunit protein uS11 (130 aa).

The protein belongs to the universal ribosomal protein uS11 family. In terms of assembly, part of the 30S ribosomal subunit. Interacts with proteins S7 and S18. Binds to IF-3.

Located on the platform of the 30S subunit, it bridges several disparate RNA helices of the 16S rRNA. Forms part of the Shine-Dalgarno cleft in the 70S ribosome. The protein is Small ribosomal subunit protein uS11 of Prochlorococcus marinus (strain MIT 9313).